The chain runs to 37 residues: Ice-structuring protein 3 (37 aa).

Belongs to the type-I AFP family.

Contributes to protect fish blood from freezing at subzero sea water temperatures. Lowers the blood freezing point. Binds to nascent ice crystals and prevents further growth. In Pseudopleuronectes americanus (Winter flounder), this protein is Ice-structuring protein 3.